Reading from the N-terminus, the 275-residue chain is Nitrate import permease protein NrtB (275 aa).

A run of 7 helical transmembrane segments spans residues 25–45, 89–109, 120–140, 147–167, 189–209, 213–233, and 238–258; these read VIRP…LCSG, VAVG…LIGS, IFQV…LAAL, AIFV…TVGA, FFNI…RIGI, WLAI…FFIW, and SSLI…GLLL. Residues 82–262 form the ABC transmembrane type-1 domain; it reads IFASLTRVAV…IVGLLLDRFI (181 aa).

The protein belongs to the binding-protein-dependent transport system permease family. CysTW subfamily. The complex is composed of two ATP-binding proteins (NrtC and NrtD), two transmembrane proteins (NrtB) and a solute-binding protein (NrtA).

Its subcellular location is the cell inner membrane. In terms of biological role, part of the ABC transporter complex NrtABCD involved in nitrate uptake. The complex is probably also involved in nitrite transport. Probably responsible for the translocation of the substrate across the membrane. The polypeptide is Nitrate import permease protein NrtB (nrtB) (Synechocystis sp. (strain ATCC 27184 / PCC 6803 / Kazusa)).